We begin with the raw amino-acid sequence, 515 residues long: Maturase K (515 aa).

Belongs to the intron maturase 2 family. MatK subfamily.

The protein resides in the plastid. Its subcellular location is the chloroplast. Functionally, usually encoded in the trnK tRNA gene intron. Probably assists in splicing its own and other chloroplast group II introns. In Pinus luchuensis (Ryukyu island pine), this protein is Maturase K.